A 458-amino-acid polypeptide reads, in one-letter code: UDP-N-acetylglucosamine 1-carboxyvinyltransferase (458 aa).

A phosphoenolpyruvate-binding site is contributed by 34 to 35 (KN). R104 contributes to the UDP-N-acetyl-alpha-D-glucosamine binding site. The active-site Proton donor is the C128. The residue at position 128 (C128) is a 2-(S-cysteinyl)pyruvic acid O-phosphothioketal. UDP-N-acetyl-alpha-D-glucosamine is bound by residues D320 and V342.

Belongs to the EPSP synthase family. MurA subfamily.

The protein localises to the cytoplasm. The enzyme catalyses phosphoenolpyruvate + UDP-N-acetyl-alpha-D-glucosamine = UDP-N-acetyl-3-O-(1-carboxyvinyl)-alpha-D-glucosamine + phosphate. Its pathway is cell wall biogenesis; peptidoglycan biosynthesis. Its function is as follows. Cell wall formation. Adds enolpyruvyl to UDP-N-acetylglucosamine. This chain is UDP-N-acetylglucosamine 1-carboxyvinyltransferase, found in Prochlorococcus marinus (strain NATL2A).